The chain runs to 141 residues: Protein X (141 aa).

Over residues 24–48 the composition is skewed to low complexity; sequence QSSGPPFPRPSAGSAASPASSLSAS. The disordered stretch occupies residues 24 to 51; sequence QSSGPPFPRPSAGSAASPASSLSASDES. Positions 68–113 are mitochondrial targeting sequence; that stretch reads PCCLVVTCAELRTMDSTVNFVSWHANRQLGMPSKDLWTPYIRDQLL.

Belongs to the orthohepadnavirus protein X family. As to quaternary structure, may form homodimer. May interact with host CEBPA, CFLAR, CREB1, DDB1, E4F1, HBXIP, HSPD1/HSP60, NFKBIA, POLR2E and SMAD4. Interacts with host SMC5-SMC6 complex and induces its degradation. Interacts with host TRPC4AP; leading to prevent ubiquitination of TRPC4AP. Interacts with host PLSCR1; this interaction promotes ubiquitination and degradation of HBx and impairs HBx-mediated cell proliferation. Post-translationally, a fraction may be phosphorylated in insect cells and HepG2 cells, a human hepatoblastoma cell line. Phosphorylated in vitro by host protein kinase C or mitogen-activated protein kinase. N-acetylated in insect cells.

It localises to the host cytoplasm. The protein localises to the host nucleus. It is found in the host mitochondrion. Functionally, multifunctional protein that plays a role in silencing host antiviral defenses and promoting viral transcription. Does not seem to be essential for HBV infection. May be directly involved in development of cirrhosis and liver cancer (hepatocellular carcinoma). Most of cytosolic activities involve modulation of cytosolic calcium. The effect on apoptosis is controversial depending on the cell types in which the studies have been conducted. May induce apoptosis by localizing in mitochondria and causing loss of mitochondrial membrane potential. May also modulate apoptosis by binding host CFLAR, a key regulator of the death-inducing signaling complex (DISC). Promotes viral transcription by using the host E3 ubiquitin ligase DDB1 to target the SMC5-SMC6 complex to proteasomal degradation. This host complex would otherwise bind to viral episomal DNA, and prevents its transcription. Moderately stimulates transcription of many different viral and cellular transcription elements. Promoters and enhancers stimulated by HBx contain DNA binding sites for NF-kappa-B, AP-1, AP-2, c-EBP, ATF/CREB, or the calcium-activated factor NF-AT. In Woodchuck hepatitis B virus (isolate 1) (WHV), this protein is Protein X.